The following is a 92-amino-acid chain: MIAMARILAIYRVLLDGSISSDEAIQRIRKELEDKGFKLEGYDENPIGFGIVALNLKITAPEEDGITDAISSVLEELEGVSSVELDMVSRVG.

It belongs to the EF-1-beta/EF-1-delta family.

Its function is as follows. Promotes the exchange of GDP for GTP in EF-1-alpha/GDP, thus allowing the regeneration of EF-1-alpha/GTP that could then be used to form the ternary complex EF-1-alpha/GTP/AAtRNA. The chain is Elongation factor 1-beta from Korarchaeum cryptofilum (strain OPF8).